Here is a 246-residue protein sequence, read N- to C-terminus: 1-(5-phosphoribosyl)-5-[(5-phosphoribosylamino)methylideneamino] imidazole-4-carboxamide isomerase (246 aa).

Asp-8 (proton acceptor) is an active-site residue. Catalysis depends on Asp-131, which acts as the Proton donor.

This sequence belongs to the HisA/HisF family.

The protein localises to the cytoplasm. The catalysed reaction is 1-(5-phospho-beta-D-ribosyl)-5-[(5-phospho-beta-D-ribosylamino)methylideneamino]imidazole-4-carboxamide = 5-[(5-phospho-1-deoxy-D-ribulos-1-ylimino)methylamino]-1-(5-phospho-beta-D-ribosyl)imidazole-4-carboxamide. It participates in amino-acid biosynthesis; L-histidine biosynthesis; L-histidine from 5-phospho-alpha-D-ribose 1-diphosphate: step 4/9. The protein is 1-(5-phosphoribosyl)-5-[(5-phosphoribosylamino)methylideneamino] imidazole-4-carboxamide isomerase of Chromobacterium violaceum (strain ATCC 12472 / DSM 30191 / JCM 1249 / CCUG 213 / NBRC 12614 / NCIMB 9131 / NCTC 9757 / MK).